A 77-amino-acid polypeptide reads, in one-letter code: Defensin-like protein 91 (77 aa).

The N-terminal stretch at 1 to 27 is a signal peptide; it reads METKKISYFLLPSLMIVALIFQPMCSA. Cystine bridges form between cysteine 38-cysteine 75, cysteine 43-cysteine 64, cysteine 49-cysteine 73, and cysteine 53-cysteine 74.

It belongs to the DEFL family.

It localises to the secreted. The protein is Defensin-like protein 91 (LCR47) of Arabidopsis thaliana (Mouse-ear cress).